The sequence spans 311 residues: Malate dehydrogenase (311 aa).

Residues G7–G13 and D34 contribute to the NAD(+) site. Residues R81 and R87 each coordinate substrate. NAD(+) is bound by residues N94 and I117–N119. Substrate is bound by residues N119 and R153. H177 acts as the Proton acceptor in catalysis. M227 is a binding site for NAD(+).

This sequence belongs to the LDH/MDH superfamily. MDH type 1 family. As to quaternary structure, homodimer.

The catalysed reaction is (S)-malate + NAD(+) = oxaloacetate + NADH + H(+). In terms of biological role, catalyzes the reversible oxidation of malate to oxaloacetate. In Shewanella denitrificans (strain OS217 / ATCC BAA-1090 / DSM 15013), this protein is Malate dehydrogenase.